The chain runs to 284 residues: UPF0354 protein SERP1303 (284 aa).

The protein belongs to the UPF0354 family.

This chain is UPF0354 protein SERP1303, found in Staphylococcus epidermidis (strain ATCC 35984 / DSM 28319 / BCRC 17069 / CCUG 31568 / BM 3577 / RP62A).